The following is a 158-amino-acid chain: MYLLNDKVAHELKKPFGKVYKELPSIEGKVVSIGDVTTKHLLSNGIIPNLSILDFKTKRNIPVNIPHKFKTIFEVENPQGCISDEAIERIKYLSTIHDRDMALIIKGEEDLLTIPVIKYFPEDTSVIYGQPDEGMVLLKITDELKQKIEKLLKDMEER.

Residues aspartate 35, valine 36, aspartate 54, lysine 56, glutamate 109, and aspartate 132 each coordinate GTP.

This sequence belongs to the GTP-dependent DPCK family.

It carries out the reaction 3'-dephospho-CoA + GTP = GDP + CoA + H(+). The protein operates within cofactor biosynthesis; coenzyme A biosynthesis. Its function is as follows. Catalyzes the GTP-dependent phosphorylation of the 3'-hydroxyl group of dephosphocoenzyme A to form coenzyme A (CoA). This Methanococcus maripaludis (strain C5 / ATCC BAA-1333) protein is GTP-dependent dephospho-CoA kinase.